Here is a 315-residue protein sequence, read N- to C-terminus: 4-diphosphocytidyl-2-C-methyl-D-erythritol kinase (315 aa).

The active site involves Lys-26. 111–121 (PLAGGLAGGSA) is a binding site for ATP. Asp-153 is an active-site residue.

This sequence belongs to the GHMP kinase family. IspE subfamily.

It catalyses the reaction 4-CDP-2-C-methyl-D-erythritol + ATP = 4-CDP-2-C-methyl-D-erythritol 2-phosphate + ADP + H(+). The protein operates within isoprenoid biosynthesis; isopentenyl diphosphate biosynthesis via DXP pathway; isopentenyl diphosphate from 1-deoxy-D-xylulose 5-phosphate: step 3/6. Functionally, catalyzes the phosphorylation of the position 2 hydroxy group of 4-diphosphocytidyl-2C-methyl-D-erythritol. This is 4-diphosphocytidyl-2-C-methyl-D-erythritol kinase from Salinispora arenicola (strain CNS-205).